A 594-amino-acid polypeptide reads, in one-letter code: Tripeptidyl-peptidase sed4 (594 aa).

The first 20 residues, 1 to 20 (MLSSTLYAGWLLSLAAPALC), serve as a signal peptide directing secretion. Residues 21–187 (VVQEKLSAVP…AVKLPALPRR (167 aa)) constitute a propeptide, removed in mature form. N-linked (GlcNAc...) asparagine glycans are attached at residues Asn-191, Asn-229, and Asn-250. In terms of domain architecture, Peptidase S53 spans 197–594 (LITPDCLVEM…MKLKELVLSL (398 aa)). Active-site charge relay system residues include Glu-272, Asp-276, and Ser-494. 2 residues coordinate Ca(2+): Asp-536 and Ile-537. A glycan (N-linked (GlcNAc...) asparagine) is linked at Asn-568. Gly-572 and Asp-574 together coordinate Ca(2+).

Ca(2+) is required as a cofactor. Post-translationally, N-glycosylated.

It localises to the secreted. Its subcellular location is the extracellular space. It carries out the reaction Release of an N-terminal tripeptide from a polypeptide.. Functionally, secreted tripeptidyl-peptidase which degrades proteins at acidic pHs and is involved in virulence. This Aspergillus fumigatus (strain ATCC MYA-4609 / CBS 101355 / FGSC A1100 / Af293) (Neosartorya fumigata) protein is Tripeptidyl-peptidase sed4 (sed4).